The sequence spans 263 residues: ATP synthase subunit a (263 aa).

The next 6 helical transmembrane spans lie at 26–46, 86–106, 130–150, 166–186, 195–215, and 229–249; these read VHLDTLFFSLVAGATFLFFFS, VAPLALTVFCWVFVMNAIDLI, DISATLGMAICVFCLIIFYTI, PFNHWAFIPVNFVLEIVTLLA, LFGNMYAGELIFILIAVMYMA, and LAWAIFHILVITLQAFIFMML.

This sequence belongs to the ATPase A chain family. As to quaternary structure, F-type ATPases have 2 components, CF(1) - the catalytic core - and CF(0) - the membrane proton channel. CF(1) has five subunits: alpha(3), beta(3), gamma(1), delta(1), epsilon(1). CF(0) has three main subunits: a(1), b(2) and c(9-12). The alpha and beta chains form an alternating ring which encloses part of the gamma chain. CF(1) is attached to CF(0) by a central stalk formed by the gamma and epsilon chains, while a peripheral stalk is formed by the delta and b chains.

The protein resides in the cell inner membrane. Its function is as follows. Key component of the proton channel; it plays a direct role in the translocation of protons across the membrane. This chain is ATP synthase subunit a, found in Glaesserella parasuis serovar 5 (strain SH0165) (Haemophilus parasuis).